The sequence spans 98 residues: MTKSELIERIAERQDQLSAKDIELAVKLILEYMSQCLANGDRIEIRGFGSFSLHYRAPRTGRNPKTGESVELEGKFVPHFKPGKEMRDRVNESLEELP.

This sequence belongs to the bacterial histone-like protein family. As to quaternary structure, heterodimer of an alpha and a beta chain.

This protein is one of the two subunits of integration host factor, a specific DNA-binding protein that functions in genetic recombination as well as in transcriptional and translational control. The chain is Integration host factor subunit beta from Teredinibacter turnerae (strain ATCC 39867 / T7901).